The chain runs to 56 residues: Small ribosomal subunit protein uS14 (56 aa).

Cys21, Cys24, Cys39, and Cys42 together coordinate Zn(2+).

It belongs to the universal ribosomal protein uS14 family. Zn(2+) is required as a cofactor.

This is Small ribosomal subunit protein uS14 (rps29A) from Guillardia theta (Cryptophyte).